Reading from the N-terminus, the 237-residue chain is Ribosomal RNA small subunit methyltransferase G (237 aa).

S-adenosyl-L-methionine-binding positions include Gly78, Phe83, 129–130, and Arg148; that span reads AE.

This sequence belongs to the methyltransferase superfamily. RNA methyltransferase RsmG family.

It localises to the cytoplasm. Specifically methylates the N7 position of a guanine in 16S rRNA. The polypeptide is Ribosomal RNA small subunit methyltransferase G (Streptococcus pyogenes serotype M18 (strain MGAS8232)).